Consider the following 147-residue polypeptide: Hemoglobin subunit deltaH (147 aa).

The region spanning 3 to 147 (RLTDSEKAEV…MANALAHKYH (145 aa)) is the Globin domain. 2 residues coordinate heme b: His64 and His93.

It belongs to the globin family. As to quaternary structure, heterotetramer of two delta chains and two alpha chains. As to expression, red blood cells.

This chain is Hemoglobin subunit deltaH, found in Procavia capensis (Rock hyrax).